Consider the following 235-residue polypeptide: Aspartate/glutamate leucyltransferase (235 aa).

Belongs to the R-transferase family. Bpt subfamily.

It is found in the cytoplasm. It carries out the reaction N-terminal L-glutamyl-[protein] + L-leucyl-tRNA(Leu) = N-terminal L-leucyl-L-glutamyl-[protein] + tRNA(Leu) + H(+). The catalysed reaction is N-terminal L-aspartyl-[protein] + L-leucyl-tRNA(Leu) = N-terminal L-leucyl-L-aspartyl-[protein] + tRNA(Leu) + H(+). Functionally, functions in the N-end rule pathway of protein degradation where it conjugates Leu from its aminoacyl-tRNA to the N-termini of proteins containing an N-terminal aspartate or glutamate. This chain is Aspartate/glutamate leucyltransferase, found in Pseudomonas putida (strain ATCC 47054 / DSM 6125 / CFBP 8728 / NCIMB 11950 / KT2440).